Here is a 268-residue protein sequence, read N- to C-terminus: Octanoyltransferase (268 aa).

A BPL/LPL catalytic domain is found at 73–261 (GEADELVWLL…AFEEVFGPAV (189 aa)). Residues 112-119 (RGGEYTYH), 192-194 (ALG), and 205-207 (GLS) each bind substrate. C223 acts as the Acyl-thioester intermediate in catalysis.

Belongs to the LipB family.

It localises to the cytoplasm. It catalyses the reaction octanoyl-[ACP] + L-lysyl-[protein] = N(6)-octanoyl-L-lysyl-[protein] + holo-[ACP] + H(+). Its pathway is protein modification; protein lipoylation via endogenous pathway; protein N(6)-(lipoyl)lysine from octanoyl-[acyl-carrier-protein]: step 1/2. Catalyzes the transfer of endogenously produced octanoic acid from octanoyl-acyl-carrier-protein onto the lipoyl domains of lipoate-dependent enzymes. Lipoyl-ACP can also act as a substrate although octanoyl-ACP is likely to be the physiological substrate. This Agrobacterium fabrum (strain C58 / ATCC 33970) (Agrobacterium tumefaciens (strain C58)) protein is Octanoyltransferase.